The chain runs to 186 residues: MIDETSQALRDFSQRYCDLWQQKSGHAPASQELYGIPSPCVMATDEDEVWWQPRPFTLAPNLDAVERALDIRLQPAVTAFYTSQFAGDMTGTLDGRPLSLVQVWSEDDFIRVQENLIGHLVMKRRLKQSPTLFIATTDSELEVISVCNVSGEVILEQLGTKKRQVIASSIENLLIALQPLIINCSN.

The protein belongs to the Syd family.

The protein resides in the cell inner membrane. Its function is as follows. Interacts with the SecY protein in vivo. May bind preferentially to an uncomplexed state of SecY, thus functioning either as a chelating agent for excess SecY in the cell or as a regulatory factor that negatively controls the translocase function. The sequence is that of Protein Syd from Erwinia tasmaniensis (strain DSM 17950 / CFBP 7177 / CIP 109463 / NCPPB 4357 / Et1/99).